Consider the following 467-residue polypeptide: Argininosuccinate lyase (467 aa).

Belongs to the lyase 1 family. Argininosuccinate lyase subfamily.

The protein localises to the cytoplasm. It catalyses the reaction 2-(N(omega)-L-arginino)succinate = fumarate + L-arginine. Its pathway is amino-acid biosynthesis; L-arginine biosynthesis; L-arginine from L-ornithine and carbamoyl phosphate: step 3/3. The protein is Argininosuccinate lyase of Rhizobium etli (strain ATCC 51251 / DSM 11541 / JCM 21823 / NBRC 15573 / CFN 42).